Here is a 188-residue protein sequence, read N- to C-terminus: Murein DD-endopeptidase MepS/Murein LD-carboxypeptidase (188 aa).

Residues 1–26 (MVKSQPILRYILRGIPAIAVAVLLSA) form the signal peptide. Residue C27 is the site of N-palmitoyl cysteine attachment. C27 carries S-diacylglycerol cysteine lipidation. The NlpC/P60 domain occupies 64-185 (VDVKSRIMDQ…KRYNEARRVL (122 aa)). C94 (nucleophile) is an active-site residue. The active-site Proton acceptor is H145. The active site involves H157.

The protein belongs to the peptidase C40 family. In terms of assembly, monomer.

It localises to the cell outer membrane. It carries out the reaction N-acetyl-D-glucosaminyl-N-acetylmuramoyl-L-alanyl-meso-2,6-diaminoheptanedioyl-D-alanine + H2O = N-acetyl-D-glucosaminyl-N-acetylmuramoyl-L-alanyl-meso-2,6-diaminoheptanedioate + D-alanine. Its pathway is cell wall biogenesis; cell wall polysaccharide biosynthesis. Functionally, a murein DD-endopeptidase with specificity for D-Ala-meso-diaminopimelic acid (mDAP) cross-links. Its role is probably to cleave D-Ala-mDAP cross-links to allow insertion of new glycans and thus cell wall expansion. Functionally redundant with MepM and MepH. Also has weak LD-carboxypeptidase activity on L-mDAP-D-Ala peptide bonds. In Escherichia coli O157:H7, this protein is Murein DD-endopeptidase MepS/Murein LD-carboxypeptidase (mepS).